Consider the following 312-residue polypeptide: Ribose-phosphate pyrophosphokinase (312 aa).

Residues 38 to 40 (DGE) and 97 to 98 (RQ) each bind ATP. Mg(2+) is bound by residues histidine 131 and aspartate 170. The active site involves lysine 193. D-ribose 5-phosphate contacts are provided by residues arginine 195, aspartate 219, and 223-227 (DTAGT).

It belongs to the ribose-phosphate pyrophosphokinase family. Class I subfamily. In terms of assembly, homohexamer. The cofactor is Mg(2+).

The protein resides in the cytoplasm. The catalysed reaction is D-ribose 5-phosphate + ATP = 5-phospho-alpha-D-ribose 1-diphosphate + AMP + H(+). The protein operates within metabolic intermediate biosynthesis; 5-phospho-alpha-D-ribose 1-diphosphate biosynthesis; 5-phospho-alpha-D-ribose 1-diphosphate from D-ribose 5-phosphate (route I): step 1/1. Involved in the biosynthesis of the central metabolite phospho-alpha-D-ribosyl-1-pyrophosphate (PRPP) via the transfer of pyrophosphoryl group from ATP to 1-hydroxyl of ribose-5-phosphate (Rib-5-P). This is Ribose-phosphate pyrophosphokinase from Leptospira interrogans serogroup Icterohaemorrhagiae serovar copenhageni (strain Fiocruz L1-130).